Reading from the N-terminus, the 191-residue chain is Protein Ves (191 aa).

Belongs to the Ves family.

The polypeptide is Protein Ves (Escherichia coli O139:H28 (strain E24377A / ETEC)).